Reading from the N-terminus, the 685-residue chain is UvrABC system protein B (685 aa).

A Helicase ATP-binding domain is found at 30 to 188; it reads DGVLRGDRWQ…QELVSLHYIR (159 aa). 43–50 contributes to the ATP binding site; the sequence is GVTGSGKT. Residues 96–119 carry the Beta-hairpin motif; that stretch reads YYDFYQPEAYLPALDKYIAKDLRI. In terms of domain architecture, Helicase C-terminal spans 435–597; that stretch reads QIDDLLAEIR…ITPRSIRKSL (163 aa). A UVR domain is found at 641–676; the sequence is YAMVAELRLEMNEAAIQMEYEKAAYLRDEIARLMHG.

Belongs to the UvrB family. Forms a heterotetramer with UvrA during the search for lesions. Interacts with UvrC in an incision complex.

Its subcellular location is the cytoplasm. In terms of biological role, the UvrABC repair system catalyzes the recognition and processing of DNA lesions. A damage recognition complex composed of 2 UvrA and 2 UvrB subunits scans DNA for abnormalities. Upon binding of the UvrA(2)B(2) complex to a putative damaged site, the DNA wraps around one UvrB monomer. DNA wrap is dependent on ATP binding by UvrB and probably causes local melting of the DNA helix, facilitating insertion of UvrB beta-hairpin between the DNA strands. Then UvrB probes one DNA strand for the presence of a lesion. If a lesion is found the UvrA subunits dissociate and the UvrB-DNA preincision complex is formed. This complex is subsequently bound by UvrC and the second UvrB is released. If no lesion is found, the DNA wraps around the other UvrB subunit that will check the other stand for damage. The protein is UvrABC system protein B of Chlorobium phaeobacteroides (strain DSM 266 / SMG 266 / 2430).